A 362-amino-acid polypeptide reads, in one-letter code: Histidinol-phosphate aminotransferase (362 aa).

N6-(pyridoxal phosphate)lysine is present on Lys211.

This sequence belongs to the class-II pyridoxal-phosphate-dependent aminotransferase family. Histidinol-phosphate aminotransferase subfamily. In terms of assembly, homodimer. Pyridoxal 5'-phosphate is required as a cofactor.

The enzyme catalyses L-histidinol phosphate + 2-oxoglutarate = 3-(imidazol-4-yl)-2-oxopropyl phosphate + L-glutamate. It participates in amino-acid biosynthesis; L-histidine biosynthesis; L-histidine from 5-phospho-alpha-D-ribose 1-diphosphate: step 7/9. The sequence is that of Histidinol-phosphate aminotransferase from Serratia proteamaculans (strain 568).